Consider the following 352-residue polypeptide: Holliday junction branch migration complex subunit RuvB (352 aa).

Residues 4–185 (PDRLISAVSG…FGIVQRLEFY (182 aa)) are large ATPase domain (RuvB-L). ATP contacts are provided by residues Ile24, Arg25, Gly66, Lys69, Thr70, Thr71, 132–134 (EDF), Arg175, Tyr185, and Arg222. Position 70 (Thr70) interacts with Mg(2+). The small ATPAse domain (RuvB-S) stretch occupies residues 186–256 (NVEDLATIVS…IADKALNLLD (71 aa)). A head domain (RuvB-H) region spans residues 259 to 352 (ERGFDHLDRR…TDLFTSEDGN (94 aa)). DNA contacts are provided by Arg295, Arg314, and Arg319.

This sequence belongs to the RuvB family. Homohexamer. Forms an RuvA(8)-RuvB(12)-Holliday junction (HJ) complex. HJ DNA is sandwiched between 2 RuvA tetramers; dsDNA enters through RuvA and exits via RuvB. An RuvB hexamer assembles on each DNA strand where it exits the tetramer. Each RuvB hexamer is contacted by two RuvA subunits (via domain III) on 2 adjacent RuvB subunits; this complex drives branch migration. In the full resolvosome a probable DNA-RuvA(4)-RuvB(12)-RuvC(2) complex forms which resolves the HJ.

Its subcellular location is the cytoplasm. It carries out the reaction ATP + H2O = ADP + phosphate + H(+). The RuvA-RuvB-RuvC complex processes Holliday junction (HJ) DNA during genetic recombination and DNA repair, while the RuvA-RuvB complex plays an important role in the rescue of blocked DNA replication forks via replication fork reversal (RFR). RuvA specifically binds to HJ cruciform DNA, conferring on it an open structure. The RuvB hexamer acts as an ATP-dependent pump, pulling dsDNA into and through the RuvAB complex. RuvB forms 2 homohexamers on either side of HJ DNA bound by 1 or 2 RuvA tetramers; 4 subunits per hexamer contact DNA at a time. Coordinated motions by a converter formed by DNA-disengaged RuvB subunits stimulates ATP hydrolysis and nucleotide exchange. Immobilization of the converter enables RuvB to convert the ATP-contained energy into a lever motion, pulling 2 nucleotides of DNA out of the RuvA tetramer per ATP hydrolyzed, thus driving DNA branch migration. The RuvB motors rotate together with the DNA substrate, which together with the progressing nucleotide cycle form the mechanistic basis for DNA recombination by continuous HJ branch migration. Branch migration allows RuvC to scan DNA until it finds its consensus sequence, where it cleaves and resolves cruciform DNA. The chain is Holliday junction branch migration complex subunit RuvB from Pseudomonas aeruginosa (strain LESB58).